The sequence spans 61 residues: Acetylcholinesterase toxin C (61 aa).

4 cysteine pairs are disulfide-bonded: C3–C22, C17–C39, C41–C52, and C53–C59.

The protein belongs to the three-finger toxin family. Short-chain subfamily. Acn-esterase inhibitor sub-subfamily. In terms of tissue distribution, expressed by the venom gland.

The protein localises to the secreted. In terms of biological role, inhibits acetylcholinesterase. The polypeptide is Acetylcholinesterase toxin C (Dendroaspis polylepis polylepis (Black mamba)).